The sequence spans 419 residues: UDP-N-acetylglucosamine 1-carboxyvinyltransferase (419 aa).

Residue 22 to 23 coordinates phosphoenolpyruvate; the sequence is KN. Residue Arg-95 participates in UDP-N-acetyl-alpha-D-glucosamine binding. Cys-119 acts as the Proton donor in catalysis. Cys-119 is modified (2-(S-cysteinyl)pyruvic acid O-phosphothioketal). UDP-N-acetyl-alpha-D-glucosamine-binding positions include 164–167, Asp-308, and Ile-330; that span reads KVSV.

This sequence belongs to the EPSP synthase family. MurA subfamily.

The protein localises to the cytoplasm. It carries out the reaction phosphoenolpyruvate + UDP-N-acetyl-alpha-D-glucosamine = UDP-N-acetyl-3-O-(1-carboxyvinyl)-alpha-D-glucosamine + phosphate. It functions in the pathway cell wall biogenesis; peptidoglycan biosynthesis. Functionally, cell wall formation. Adds enolpyruvyl to UDP-N-acetylglucosamine. The chain is UDP-N-acetylglucosamine 1-carboxyvinyltransferase from Rickettsia rickettsii (strain Iowa).